A 121-amino-acid polypeptide reads, in one-letter code: Large ribosomal subunit protein bL20c (121 aa).

Belongs to the bacterial ribosomal protein bL20 family.

It is found in the plastid. Its subcellular location is the chloroplast. In terms of biological role, binds directly to 23S ribosomal RNA and is necessary for the in vitro assembly process of the 50S ribosomal subunit. It is not involved in the protein synthesizing functions of that subunit. This Lotus japonicus (Lotus corniculatus var. japonicus) protein is Large ribosomal subunit protein bL20c.